A 151-amino-acid chain; its full sequence is Abdominal ganglion neuropeptide L11 (151 aa).

Residues 1–25 (MPCTPNSHRLLLVTALCLLITSLFA) form the signal peptide.

It is found in the secreted. In Aplysia californica (California sea hare), this protein is Abdominal ganglion neuropeptide L11.